Here is a 195-residue protein sequence, read N- to C-terminus: CASP-like protein 1B1 (195 aa).

Residues 1–22 lie on the Cytoplasmic side of the membrane; the sequence is MGLQNEEKLELGCTGLQPKPKK. A helical membrane pass occupies residues 23 to 43; the sequence is WVLLMVRVVAFLATAAATLVM. The Extracellular portion of the chain corresponds to 44-75; sequence ALNKETKTLVVATVGNTPIKVTLTAKFQHTPA. The helical transmembrane segment at 76-96 threads the bilayer; that stretch reads FVFFVIANGMASFHNLLMIMV. Residues 97–109 lie on the Cytoplasmic side of the membrane; the sequence is ELCGQKLDYKGMR. A helical transmembrane segment spans residues 110–130; the sequence is LAMVAILDMMTVALVSGGASA. Residues 131–163 are Extracellular-facing; that stretch reads ATFMAELGKNGNSHARWDKICDKFETFCDHGGA. The chain crosses the membrane as a helical span at residues 164–184; that stretch reads ALIASSAGLILMMIISVMSIM. The Cytoplasmic portion of the chain corresponds to 185–195; the sequence is KLLIKPKSDSS.

Belongs to the Casparian strip membrane proteins (CASP) family. In terms of assembly, homodimer and heterodimers.

It is found in the cell membrane. This is CASP-like protein 1B1 from Populus trichocarpa (Western balsam poplar).